Consider the following 588-residue polypeptide: DNA mismatch repair protein MutL (588 aa).

This sequence belongs to the DNA mismatch repair MutL/HexB family.

Functionally, this protein is involved in the repair of mismatches in DNA. It is required for dam-dependent methyl-directed DNA mismatch repair. May act as a 'molecular matchmaker', a protein that promotes the formation of a stable complex between two or more DNA-binding proteins in an ATP-dependent manner without itself being part of a final effector complex. The sequence is that of DNA mismatch repair protein MutL from Fervidobacterium nodosum (strain ATCC 35602 / DSM 5306 / Rt17-B1).